The chain runs to 66 residues: Conotoxin Cl14.1a (66 aa).

Positions 1-19 (MNVTAMFIVLLLTMPLTDG) are cleaved as a signal peptide. Positions 20-49 (FNIRAINGGELFGLVQRDAGNALDHGFYRR) are excised as a propeptide.

The protein belongs to the conotoxin L superfamily. Post-translationally, contains 2 disulfide bonds. Expressed by the venom duct.

The protein localises to the secreted. Its function is as follows. Probable neurotoxin with unknown target. Possibly targets ion channels. This peptide could be considered as an apoptosis activator in some cancers (tested on lung and breast cancer cell lines). Provokes the decrease of H1299 lung cancer cells viability after 24 hours treatment, and induces a high Bax/Bcl-2 ratio, which suggests that this peptide can activate apoptosis in H1299 cells. In addition, H1299 and H1437 lung cancer cell lines treated with this peptide have decreased cell viability, activated caspases, and reduced expression of the pro-survival protein NF-kappa-B (NFKB1), indicating activation of apoptosis. In synergy with MicroRNA-101-3p, this synthetic peptide inhibits breast cancer cells (SK-BR-3 and MCF-7) migration, invasion, and proliferation through suppressing the expression of the methyltransferase EZH2. In parallel, this synergy treatment is able to promote the apoptosis of breast cancer cells. Against microbes, this synthetic toxin (at micromolar concentrations) lowers viability and inhibits host cell invasion by the opportunistic parasite Toxoplasma gondii (tachyzoite form). In addition, it permits T.gondii intracellular replication to decrease while viability of the host cell is unaffected. The polypeptide is Conotoxin Cl14.1a (Californiconus californicus (California cone)).